Here is a 437-residue protein sequence, read N- to C-terminus: Sodium/bile acid cotransporter 4 (437 aa).

The Extracellular segment spans residues 1-103 (MDGNDNVTLL…LPFWDTPLNH (103 aa)). 3 N-linked (GlcNAc...) asparagine glycosylation sites follow: asparagine 6, asparagine 18, and asparagine 24. The disordered stretch occupies residues 37–82 (APASSAGPGPGLSLGPGPSFGFSPGPTPTPEPTTSGLAGGAASHGP). The segment covering 51–60 (GPGPSFGFSP) has biased composition (low complexity). The helical transmembrane segment at 104–124 (GLNVFVGAALCITMLGLGCTV) threads the bilayer. Residues 125 to 140 (DVNHFGAHVRRPVGAL) lie on the Cytoplasmic side of the membrane. Residues 141–161 (LAALCQFGLLPLLAFLLALAF) traverse the membrane as a helical segment. Over 162–197 (KLDEVAAVAVLLCGCCPGGNLSNLMSLLVDGDMNLS) the chain is Extracellular. Asparagine 181 and asparagine 195 each carry an N-linked (GlcNAc...) asparagine glycan. A helical transmembrane segment spans residues 198–218 (IIMTISSTLLALVLMPLCLWI). Residues 219–233 (YSWAWINTPIVQLLP) are Cytoplasmic-facing. Residues 234-254 (LGTVTLTLCSTLIPIGLGVFI) form a helical membrane-spanning segment. At 255–267 (RYKYSRVADYIVK) the chain is on the extracellular side. Residues 268 to 288 (VSLWSLLVTLVVLFIMTGTML) form a helical membrane-spanning segment. The Cytoplasmic segment spans residues 289-291 (GPE). The helical transmembrane segment at 292–312 (LLASIPAAVYVIAIFMPLAGY) threads the bilayer. The Extracellular portion of the chain corresponds to 313 to 360 (ASGYGLATLFHLPPNCKRTVCLETGSQNVQLCTAILKLAFPPQFIGSM). A helical transmembrane segment spans residues 361–381 (YMFPLLYALFQSAEAGIFVLI). Over 382-437 (YKMYGSEMLHKRDPLDEDEDTDISYKKLKEEEMADTSYGTVKAENIIMMETAQTSL) the chain is Cytoplasmic.

It belongs to the bile acid:sodium symporter (BASS) (TC 2.A.28) family. Activated following N-terminal proteolytic cleavage by thrombin and/or proteases. As to expression, highly expressed in brain and small intestine, and moderately expressed in colon, heart, prostate, and testis. Very low levels were detected in kidney, liver, ovary, placenta, spleen, and thymus.

The protein resides in the cell membrane. Functionally, transporter for bile acids. The sequence is that of Sodium/bile acid cotransporter 4 (SLC10A4) from Homo sapiens (Human).